The sequence spans 502 residues: ATP synthase subunit alpha (502 aa).

The interval 119–139 is disordered; sequence GPIATTKSRPIESPAPGVMDR. An ATP-binding site is contributed by 169 to 176; it reads GDRQTGKT.

Belongs to the ATPase alpha/beta chains family. F-type ATPases have 2 components, CF(1) - the catalytic core - and CF(0) - the membrane proton channel. CF(1) has five subunits: alpha(3), beta(3), gamma(1), delta(1), epsilon(1). CF(0) has three main subunits: a(1), b(2) and c(9-12). The alpha and beta chains form an alternating ring which encloses part of the gamma chain. CF(1) is attached to CF(0) by a central stalk formed by the gamma and epsilon chains, while a peripheral stalk is formed by the delta and b chains.

It localises to the cell membrane. The catalysed reaction is ATP + H2O + 4 H(+)(in) = ADP + phosphate + 5 H(+)(out). Functionally, produces ATP from ADP in the presence of a proton gradient across the membrane. The alpha chain is a regulatory subunit. This Alkalihalophilus pseudofirmus (strain ATCC BAA-2126 / JCM 17055 / OF4) (Bacillus pseudofirmus) protein is ATP synthase subunit alpha.